Reading from the N-terminus, the 191-residue chain is Thymidine kinase (191 aa).

ATP is bound by residues 9 to 16 (GSMNSGKT) and 85 to 88 (DESQ). E86 serves as the catalytic Proton acceptor. The Zn(2+) site is built by C143, C146, C181, and C184.

This sequence belongs to the thymidine kinase family. As to quaternary structure, homotetramer.

The protein resides in the cytoplasm. It carries out the reaction thymidine + ATP = dTMP + ADP + H(+). In Listeria innocua serovar 6a (strain ATCC BAA-680 / CLIP 11262), this protein is Thymidine kinase.